Reading from the N-terminus, the 434-residue chain is Tol-Pal system protein TolB (434 aa).

An N-terminal signal peptide occupies residues 1–28 (MQQTCKRKIWMQISVALVTSLWMISAQA).

Belongs to the TolB family. The Tol-Pal system is composed of five core proteins: the inner membrane proteins TolA, TolQ and TolR, the periplasmic protein TolB and the outer membrane protein Pal. They form a network linking the inner and outer membranes and the peptidoglycan layer.

The protein resides in the periplasm. Part of the Tol-Pal system, which plays a role in outer membrane invagination during cell division and is important for maintaining outer membrane integrity. This is Tol-Pal system protein TolB from Alcanivorax borkumensis (strain ATCC 700651 / DSM 11573 / NCIMB 13689 / SK2).